The chain runs to 308 residues: Elongation factor Ts (308 aa).

The involved in Mg(2+) ion dislocation from EF-Tu stretch occupies residues 80–83 (TDFV).

It belongs to the EF-Ts family.

It localises to the cytoplasm. In terms of biological role, associates with the EF-Tu.GDP complex and induces the exchange of GDP to GTP. It remains bound to the aminoacyl-tRNA.EF-Tu.GTP complex up to the GTP hydrolysis stage on the ribosome. This chain is Elongation factor Ts, found in Rhizobium etli (strain ATCC 51251 / DSM 11541 / JCM 21823 / NBRC 15573 / CFN 42).